We begin with the raw amino-acid sequence, 468 residues long: Lactate utilization protein B (468 aa).

2 consecutive 4Fe-4S ferredoxin-type domains span residues 303-333 and 352-381; these read GTQF…GHAY and YENY…LHEL. Cys-312, Cys-315, Cys-318, Cys-322, Cys-365, Cys-368, and Cys-372 together coordinate [4Fe-4S] cluster. Positions 442 to 468 are disordered; the sequence is PAWTDSKDLPQPNKQTVRDWFKKRGNA. A compositionally biased stretch (basic and acidic residues) spans 457-468; sequence TVRDWFKKRGNA.

The protein belongs to the LutB/YkgF family.

In terms of biological role, is involved in L-lactate degradation and allows cells to grow with lactate as the sole carbon source. Has probably a role as an electron transporter during oxidation of L-lactate. This chain is Lactate utilization protein B, found in Exiguobacterium sp. (strain ATCC BAA-1283 / AT1b).